Consider the following 101-residue polypeptide: Integration host factor subunit alpha (101 aa).

This sequence belongs to the bacterial histone-like protein family. In terms of assembly, heterodimer of an alpha and a beta chain.

Functionally, this protein is one of the two subunits of integration host factor, a specific DNA-binding protein that functions in genetic recombination as well as in transcriptional and translational control. This Halorhodospira halophila (strain DSM 244 / SL1) (Ectothiorhodospira halophila (strain DSM 244 / SL1)) protein is Integration host factor subunit alpha.